Here is a 743-residue protein sequence, read N- to C-terminus: Elongation factor 2 (743 aa).

Positions 19–265 constitute a tr-type G domain; that stretch reads NNIRNIGIIA…MVVRHLPSPK (247 aa). GTP is bound by residues 28 to 35, 94 to 98, and 148 to 151; these read AHIHHGKT, DTPGH, and NKVD. The residue at position 615 (H615) is a Diphthamide.

Belongs to the TRAFAC class translation factor GTPase superfamily. Classic translation factor GTPase family. EF-G/EF-2 subfamily.

Its subcellular location is the cytoplasm. Functionally, catalyzes the GTP-dependent ribosomal translocation step during translation elongation. During this step, the ribosome changes from the pre-translocational (PRE) to the post-translocational (POST) state as the newly formed A-site-bound peptidyl-tRNA and P-site-bound deacylated tRNA move to the P and E sites, respectively. Catalyzes the coordinated movement of the two tRNA molecules, the mRNA and conformational changes in the ribosome. The sequence is that of Elongation factor 2 from Nanoarchaeum equitans (strain Kin4-M).